The sequence spans 378 residues: UDP-N-acetylglucosamine--N-acetylmuramyl-(pentapeptide) pyrophosphoryl-undecaprenol N-acetylglucosamine transferase (378 aa).

UDP-N-acetyl-alpha-D-glucosamine is bound by residues 14-16 (TGG), Asn125, Arg165, Ser193, and Gln293.

This sequence belongs to the glycosyltransferase 28 family. MurG subfamily.

The protein resides in the cell inner membrane. The enzyme catalyses di-trans,octa-cis-undecaprenyl diphospho-N-acetyl-alpha-D-muramoyl-L-alanyl-D-glutamyl-meso-2,6-diaminopimeloyl-D-alanyl-D-alanine + UDP-N-acetyl-alpha-D-glucosamine = di-trans,octa-cis-undecaprenyl diphospho-[N-acetyl-alpha-D-glucosaminyl-(1-&gt;4)]-N-acetyl-alpha-D-muramoyl-L-alanyl-D-glutamyl-meso-2,6-diaminopimeloyl-D-alanyl-D-alanine + UDP + H(+). Its pathway is cell wall biogenesis; peptidoglycan biosynthesis. In terms of biological role, cell wall formation. Catalyzes the transfer of a GlcNAc subunit on undecaprenyl-pyrophosphoryl-MurNAc-pentapeptide (lipid intermediate I) to form undecaprenyl-pyrophosphoryl-MurNAc-(pentapeptide)GlcNAc (lipid intermediate II). The protein is UDP-N-acetylglucosamine--N-acetylmuramyl-(pentapeptide) pyrophosphoryl-undecaprenol N-acetylglucosamine transferase of Bartonella henselae (strain ATCC 49882 / DSM 28221 / CCUG 30454 / Houston 1) (Rochalimaea henselae).